The chain runs to 512 residues: Peroxisomal N(1)-acetyl-spermine/spermidine oxidase (512 aa).

Methionine 1 carries the post-translational modification N-acetylmethionine. A propeptide spanning residues 1–6 (MQSGGR) is cleaved from the precursor. Residues alanine 25, glutamate 46, arginine 54, and 70-71 (HW) each bind FAD. 2 residues coordinate substrate: histidine 73 and valine 195. Valine 248 provides a ligand contact to FAD. Asparagine 321 contributes to the substrate binding site. Residues glutamate 473 and 482 to 483 (TT) each bind FAD. Positions 510–512 (PRL) match the Microbody targeting signal motif.

It belongs to the flavin monoamine oxidase family. Monomer. Requires FAD as cofactor.

Its subcellular location is the peroxisome. It is found in the cytoplasm. The enzyme catalyses N(1)-acetylspermine + O2 + H2O = 3-acetamidopropanal + spermidine + H2O2. It catalyses the reaction N(1)-acetylspermidine + O2 + H2O = 3-acetamidopropanal + putrescine + H2O2. The catalysed reaction is N(1),N(12)-diacetylspermine + O2 + H2O = 3-acetamidopropanal + N(1)-acetylspermidine + H2O2. The protein operates within amine and polyamine metabolism; spermine metabolism. Functionally, flavoenzyme which catalyzes the oxidation of N(1)-acetylspermine to spermidine and is thus involved in the polyamine back-conversion. Can also oxidize N(1)-acetylspermidine to putrescine. Substrate specificity: N(1)-acetylspermine = N(1)-acetylspermidine &gt; N(1),N(12)-diacylspermine &gt;&gt; spermine. Does not oxidize spermidine. Plays an important role in the regulation of polyamine intracellular concentration. In Bos taurus (Bovine), this protein is Peroxisomal N(1)-acetyl-spermine/spermidine oxidase (PAOX).